Reading from the N-terminus, the 155-residue chain is Ribosomal RNA large subunit methyltransferase H (155 aa).

Residues leucine 72, glycine 103, and leucine 122–tryptophan 127 contribute to the S-adenosyl-L-methionine site.

The protein belongs to the RNA methyltransferase RlmH family. In terms of assembly, homodimer.

The protein localises to the cytoplasm. The enzyme catalyses pseudouridine(1915) in 23S rRNA + S-adenosyl-L-methionine = N(3)-methylpseudouridine(1915) in 23S rRNA + S-adenosyl-L-homocysteine + H(+). In terms of biological role, specifically methylates the pseudouridine at position 1915 (m3Psi1915) in 23S rRNA. This Cereibacter sphaeroides (strain ATCC 17029 / ATH 2.4.9) (Rhodobacter sphaeroides) protein is Ribosomal RNA large subunit methyltransferase H.